Here is a 400-residue protein sequence, read N- to C-terminus: 11-beta-hydroxysteroid dehydrogenase type 2 (400 aa).

82–111 serves as a coordination point for NAD(+); sequence TRAVLITGCDTGFGKETAKKLDAMGFTVLA. Ser-219 contributes to the substrate binding site. Tyr-232 (proton acceptor) is an active-site residue. The interval 378–400 is disordered; that stretch reads PGQPGPVHDTTQDPNPSPTVSAL. A compositionally biased stretch (polar residues) spans 389 to 400; sequence QDPNPSPTVSAL.

This sequence belongs to the short-chain dehydrogenases/reductases (SDR) family. As to quaternary structure, interacts with ligand-free cytoplasmic NR3C2. As to expression, highly expressed in kidney, adrenal gland and distal colon, and at much lower levels in lung, hypothalamus, hippocampus, and midbrain.

The protein localises to the microsome. The protein resides in the endoplasmic reticulum. The enzyme catalyses an 11beta-hydroxysteroid + NAD(+) = an 11-oxosteroid + NADH + H(+). It catalyses the reaction corticosterone + NAD(+) = 11-dehydrocorticosterone + NADH + H(+). The catalysed reaction is 11beta,17beta-dihydroxyandrost-4-ene-3-one + NAD(+) = 17beta-hydroxyandrost-4-ene-3,11-dione + NADH + H(+). It carries out the reaction 11beta-hydroxyandrost-4-ene-3,17-dione + NAD(+) = androst-4-ene-3,11,17-trione + NADH + H(+). The protein operates within steroid metabolism. Its activity is regulated as follows. Inhibited by glycyrrhetinic acid. Induced by progesterone, through the Ihh signaling pathway. Catalyzes the conversion of biologically active 11beta-hydroxyglucocorticoids (11beta-hydroxysteroid) such as corticosterone, to inactive 11-ketoglucocorticoids (11-oxosteroid) such as 11-dehydrocorticosterone, in the presence of NAD(+). Functions as a dehydrogenase (oxidase), thereby decreasing the concentration of active glucocorticoids, thus protecting the nonselective mineralocorticoid receptor from occupation by glucocorticoids. Plays an important role in maintaining glucocorticoids balance during preimplantation and protects the fetus from excessive maternal corticosterone exposure. Catalyzes the oxidation of 11beta-hydroxytestosterone (11beta,17beta-dihydroxyandrost-4-ene-3-one) to 11-ketotestosterone (17beta-hydroxyandrost-4-ene-3,11-dione), a major bioactive androgen. Catalyzes the conversion of 11beta-hydroxyandrostenedione (11beta-hydroxyandrost-4-ene-3,17-dione) to 11-ketoandrostenedione (androst-4-ene-3,11,17-trione), which can be further metabolized to 11-ketotestosterone. Converts 7-beta-25-dihydroxycholesterol to 7-oxo-25-hydroxycholesterol in vitro. 7-beta-25-dihydroxycholesterol (not 7-oxo-25-hydroxycholesterol) acts as a ligand for the G-protein-coupled receptor (GPCR) Epstein-Barr virus-induced gene 2 (EBI2) and may thereby regulate immune cell migration. This Rattus norvegicus (Rat) protein is 11-beta-hydroxysteroid dehydrogenase type 2 (Hsd11b2).